We begin with the raw amino-acid sequence, 388 residues long: Venom acid phosphatase Acph-1 (388 aa).

The first 15 residues, 1-15 (MSVIAILAMVVGVQA), serve as a signal peptide directing secretion. H26 acts as the Nucleophile in catalysis. Intrachain disulfides connect C145–C355 and C330–C334. N-linked (GlcNAc...) asparagine glycans are attached at residues N182 and N228. E273 serves as the catalytic Proton donor. N-linked (GlcNAc...) asparagine glycosylation occurs at N366.

It belongs to the histidine acid phosphatase family. Expressed by the venom gland.

Its subcellular location is the secreted. It catalyses the reaction a phosphate monoester + H2O = an alcohol + phosphate. This chain is Venom acid phosphatase Acph-1, found in Apis mellifera (Honeybee).